Reading from the N-terminus, the 158-residue chain is Putative pre-16S rRNA nuclease (158 aa).

It belongs to the YqgF nuclease family.

It is found in the cytoplasm. Could be a nuclease involved in processing of the 5'-end of pre-16S rRNA. In Paracoccus denitrificans (strain Pd 1222), this protein is Putative pre-16S rRNA nuclease.